The chain runs to 102 residues: PSSSQALSVPSLSSEKKTASPTCVKTPSFRRCGKTGKYGRAEAKKTHHRHHTLMSTTCRCWSSSIVLYEHLDARVTDDGKTSRRRRCSLGRYALWIYNIYSS.

Positions 1–13 (PSSSQALSVPSLS) are enriched in low complexity. The segment at 1-24 (PSSSQALSVPSLSSEKKTASPTCV) is disordered.

This is an uncharacterized protein from Human cytomegalovirus (strain AD169) (HHV-5).